The sequence spans 227 residues: Ribosomal RNA large subunit methyltransferase E (227 aa).

Residues glycine 78, tryptophan 80, aspartate 103, aspartate 119, and aspartate 143 each coordinate S-adenosyl-L-methionine. Residue lysine 183 is the Proton acceptor of the active site.

Belongs to the class I-like SAM-binding methyltransferase superfamily. RNA methyltransferase RlmE family.

Its subcellular location is the cytoplasm. The catalysed reaction is uridine(2552) in 23S rRNA + S-adenosyl-L-methionine = 2'-O-methyluridine(2552) in 23S rRNA + S-adenosyl-L-homocysteine + H(+). Specifically methylates the uridine in position 2552 of 23S rRNA at the 2'-O position of the ribose in the fully assembled 50S ribosomal subunit. This chain is Ribosomal RNA large subunit methyltransferase E, found in Rickettsia peacockii (strain Rustic).